Consider the following 304-residue polypeptide: Ribosomal RNA large subunit methyltransferase F (304 aa).

This sequence belongs to the methyltransferase superfamily. METTL16/RlmF family.

The protein localises to the cytoplasm. It catalyses the reaction adenosine(1618) in 23S rRNA + S-adenosyl-L-methionine = N(6)-methyladenosine(1618) in 23S rRNA + S-adenosyl-L-homocysteine + H(+). Its function is as follows. Specifically methylates the adenine in position 1618 of 23S rRNA. This Klebsiella pneumoniae subsp. pneumoniae (strain ATCC 700721 / MGH 78578) protein is Ribosomal RNA large subunit methyltransferase F.